Here is a 348-residue protein sequence, read N- to C-terminus: 3-isopropylmalate dehydrogenase (348 aa).

76-87 contributes to the NAD(+) binding site; it reads GPKWTDPNNRPE. Substrate is bound by residues Arg94, Arg104, Arg132, and Asp217. Residues Asp217, Asp241, and Asp245 each contribute to the Mg(2+) site. 275–287 contributes to the NAD(+) binding site; that stretch reads GSAPDIAGKNVAN.

It belongs to the isocitrate and isopropylmalate dehydrogenases family. LeuB type 1 subfamily. As to quaternary structure, homodimer. Mg(2+) serves as cofactor. Requires Mn(2+) as cofactor.

Its subcellular location is the cytoplasm. It catalyses the reaction (2R,3S)-3-isopropylmalate + NAD(+) = 4-methyl-2-oxopentanoate + CO2 + NADH. The protein operates within amino-acid biosynthesis; L-leucine biosynthesis; L-leucine from 3-methyl-2-oxobutanoate: step 3/4. Its function is as follows. Catalyzes the oxidation of 3-carboxy-2-hydroxy-4-methylpentanoate (3-isopropylmalate) to 3-carboxy-4-methyl-2-oxopentanoate. The product decarboxylates to 4-methyl-2 oxopentanoate. The polypeptide is 3-isopropylmalate dehydrogenase (Staphylococcus aureus (strain Mu50 / ATCC 700699)).